Here is a 186-residue protein sequence, read N- to C-terminus: Lipid A acyltransferase PagP (186 aa).

The N-terminal stretch at 1–25 is a signal peptide; it reads MNVSKYVAIFSFVFIQLISVGKVFA. Active-site residues include His-58, Asp-101, and Ser-102.

The protein belongs to the lipid A palmitoyltransferase family. In terms of assembly, homodimer.

It localises to the cell outer membrane. It catalyses the reaction a lipid A + a 1,2-diacyl-sn-glycero-3-phosphocholine = a hepta-acyl lipid A + a 2-acyl-sn-glycero-3-phosphocholine. The catalysed reaction is a lipid IVA + a 1,2-diacyl-sn-glycero-3-phosphocholine = a lipid IVB + a 2-acyl-sn-glycero-3-phosphocholine. It carries out the reaction a lipid IIA + a 1,2-diacyl-sn-glycero-3-phosphocholine = a lipid IIB + a 2-acyl-sn-glycero-3-phosphocholine. Functionally, transfers a fatty acid residue from the sn-1 position of a phospholipid to the N-linked hydroxyfatty acid chain on the proximal unit of lipid A or its precursors. In Shigella boydii serotype 4 (strain Sb227), this protein is Lipid A acyltransferase PagP.